Consider the following 765-residue polypeptide: Probable dipeptidyl peptidase 4 (765 aa).

The N-terminal stretch at 1-14 is a signal peptide; the sequence is MKWSILLLVGCAAA. N-linked (GlcNAc...) asparagine glycans are attached at residues N35, N78, N101, N110, N169, N218, N465, and N490. S613 (charge relay system) is an active-site residue. N665 is a glycosylation site (N-linked (GlcNAc...) asparagine). Residues D690 and H725 each act as charge relay system in the active site.

This sequence belongs to the peptidase S9B family.

Its subcellular location is the secreted. The catalysed reaction is Release of an N-terminal dipeptide, Xaa-Yaa-|-Zaa-, from a polypeptide, preferentially when Yaa is Pro, provided Zaa is neither Pro nor hydroxyproline.. In terms of biological role, extracellular dipeptidyl-peptidase which removes N-terminal dipeptides sequentially from polypeptides having unsubstituted N-termini provided that the penultimate residue is proline. Contributes to pathogenicity. The sequence is that of Probable dipeptidyl peptidase 4 (dpp4) from Aspergillus fumigatus (strain CBS 144.89 / FGSC A1163 / CEA10) (Neosartorya fumigata).